The following is a 405-amino-acid chain: Na(+)-translocating NADH-quinone reductase subunit F (405 aa).

A helical transmembrane segment spans residues 3–23; that stretch reads IILGIVMFTVIVLALALMILF. Residues 32–124 form the 2Fe-2S ferredoxin-type domain; it reads GDITIKVNDE…DMDIEVPEEV (93 aa). 4 residues coordinate [2Fe-2S] cluster: cysteine 67, cysteine 73, cysteine 76, and cysteine 108. Positions 127–267 constitute an FAD-binding FR-type domain; it reads VKKWECTVIS…SGPFGEFFAK (141 aa).

Belongs to the NqrF family. Composed of six subunits; NqrA, NqrB, NqrC, NqrD, NqrE and NqrF. It depends on [2Fe-2S] cluster as a cofactor. FAD is required as a cofactor.

It is found in the cell inner membrane. The enzyme catalyses a ubiquinone + n Na(+)(in) + NADH + H(+) = a ubiquinol + n Na(+)(out) + NAD(+). NQR complex catalyzes the reduction of ubiquinone-1 to ubiquinol by two successive reactions, coupled with the transport of Na(+) ions from the cytoplasm to the periplasm. The first step is catalyzed by NqrF, which accepts electrons from NADH and reduces ubiquinone-1 to ubisemiquinone by a one-electron transfer pathway. This chain is Na(+)-translocating NADH-quinone reductase subunit F, found in Neisseria gonorrhoeae (strain ATCC 700825 / FA 1090).